The chain runs to 215 residues: Small ribosomal subunit protein uS5 (215 aa).

A compositionally biased stretch (polar residues) spans 1–11 (MTDSSPQSNPN). The disordered stretch occupies residues 1–61 (MTDSSPQSNP…GQDRDSEWQE (61 aa)). Residues 12-28 (AVPGAADVPAAAQGQQQ) show a composition bias toward low complexity. The span at 39–61 (RGDRRGDRRGGRRGQDRDSEWQE) shows a compositional bias: basic and acidic residues. Positions 59 to 122 (WQERVVQIRR…ADGKKHLVKV (64 aa)) constitute an S5 DRBM domain.

The protein belongs to the universal ribosomal protein uS5 family. In terms of assembly, part of the 30S ribosomal subunit. Contacts proteins S4 and S8.

Functionally, with S4 and S12 plays an important role in translational accuracy. Its function is as follows. Located at the back of the 30S subunit body where it stabilizes the conformation of the head with respect to the body. In Synechococcus sp. (strain CC9902), this protein is Small ribosomal subunit protein uS5.